The sequence spans 423 residues: Diels-Alderase cheD (423 aa).

An N-terminal signal peptide occupies residues 1–18 (MKLCALFAGAVISTSAVA). Asn84 and Asn132 each carry an N-linked (GlcNAc...) asparagine glycan.

Belongs to the Diels-Alderase family.

It participates in secondary metabolite biosynthesis. Functionally, diels-Alderase; part of the gene cluster that mediates the biosynthesis of chaetoglobosin A which has a unique inhibitory activity against actin polymerization in mammalian cells. Chaetoglobosin A and its intermediates are involved in the morphological differentiation of C.globosum. The first step of the pathway is the synthesis of prochaetoglobosin I via condensation of one acetyl-CoA, 8 malonyl-CoA, and a L-tryptophan molecule by the PKS-NRPS hybrid synthetase cheA, followed by reduction of backbone double bond to install desired geometry by the enoyl reductase cheB. Further multiple oxidation steps performed by the cytochrome P450 monooxygenases cheE and cheG, as well as by the FAD-linked oxidoreductase cheF, lead to the formation of chaetoglobosin A. Depending on the order of action of these reductases, distinct intermediates can be identified. Within the pathway, the cytochrome P450 monooxygenase cheE catalyzes a stereospecific epoxidation on prochaetoglobosin I, cytoglobosin D, and chaetoglobosin J intermediates. The FAD-linked oxidoreductase cheF performs dehydrogenation of the C-20 hydroxyl groups in the 20-dihyrochaetoglobosin A and cytoglobosin D intermediates. Finally, the cytochrome P450 monooxygenase cheG can catalyze the stereospecific dihydroxylation of prochaetoglobosin I and prochaetoglobosin IV at C-19 and C-20, respectively. The Diels-Alderase cheD may play a role in the post-PKS-NRPS biosynthetic steps catalyzing Diels-Alder cyclization. In Chaetomium globosum (strain ATCC 6205 / CBS 148.51 / DSM 1962 / NBRC 6347 / NRRL 1970) (Soil fungus), this protein is Diels-Alderase cheD.